Consider the following 166-residue polypeptide: Fer3-like protein (166 aa).

A disordered region spans residues 57–88; it reads FEEGDPEEEECEVDQGDGEEEEEEERGRGVSL. Acidic residues predominate over residues 60–80; that stretch reads GDPEEEECEVDQGDGEEEEEE. A bHLH domain is found at 101–153; it reads AQRQAANIRERKRMFNLNEAFDQLRRKVPTFAYEKRLSRIETLRLAIVYISFM.

As to quaternary structure, heterodimer with TCF3/E12. Interacts with the bHLH domain of TCF3/E12.

The protein resides in the nucleus. Transcription factor that binds to the E-box and functions as inhibitor of transcription. DNA binding requires dimerization with an E protein. Inhibits transcription activation by ASCL1/MASH1 by sequestering E proteins. This chain is Fer3-like protein (FERD3L), found in Homo sapiens (Human).